The following is a 309-amino-acid chain: MRFTSNMAQIIDGKAIAQEVRTQLAHELKGMEAAGYPKPHLTAVIVGEDPASEKYVANKMVACREVGISSETKRLPASTTQEELLQLIADLNKDPQVTGILVQLPVPEHINERTICNAVDVDKDVDGFNEVNIGRTALDMEANIPATPLGVKRLLEHMKIETLGRNAVVVGRSKNVSLPMAILLHADGKYATKAMDATVTICHRYTPPKELARHCRQADIIVVAVGKPGLITKDMVKPGACVIDVGINRIKDESTGQFKLVGDVDFEEVRQVAGHITPVPGGVGPMTVAMLMHNTLKAARKQFDDRKSS.

The protein belongs to the tetrahydrofolate dehydrogenase/cyclohydrolase family. In terms of assembly, homodimer. Mg(2+) is required as a cofactor.

The protein localises to the mitochondrion. The catalysed reaction is (6R)-5,10-methylene-5,6,7,8-tetrahydrofolate + NAD(+) = (6R)-5,10-methenyltetrahydrofolate + NADH. It catalyses the reaction (6R)-5,10-methenyltetrahydrofolate + H2O = (6R)-10-formyltetrahydrofolate + H(+). Functionally, may play a role in spermatogenesis. The chain is Bifunctional methylenetetrahydrofolate dehydrogenase/cyclohydrolase, mitochondrial (Nmdmc) from Drosophila melanogaster (Fruit fly).